The chain runs to 201 residues: 3-isopropylmalate dehydratase small subunit (201 aa).

The protein belongs to the LeuD family. LeuD type 1 subfamily. In terms of assembly, heterodimer of LeuC and LeuD.

It carries out the reaction (2R,3S)-3-isopropylmalate = (2S)-2-isopropylmalate. It participates in amino-acid biosynthesis; L-leucine biosynthesis; L-leucine from 3-methyl-2-oxobutanoate: step 2/4. In terms of biological role, catalyzes the isomerization between 2-isopropylmalate and 3-isopropylmalate, via the formation of 2-isopropylmaleate. In Rhodopseudomonas palustris (strain BisB18), this protein is 3-isopropylmalate dehydratase small subunit.